Here is a 344-residue protein sequence, read N- to C-terminus: uncharacterized protein (344 aa).

Belongs to the glycosyltransferase 28 family.

This is an uncharacterized protein from Methanopyrus kandleri (strain AV19 / DSM 6324 / JCM 9639 / NBRC 100938).